The sequence spans 654 residues: Meiotically up-regulated gene 24 protein (654 aa).

Residues Arg-299–Ser-355 enclose the RRM 1 domain. The disordered stretch occupies residues Ser-383–Lys-404. The span at Cys-384–Thr-393 shows a compositional bias: polar residues. The span at Thr-394 to Lys-404 shows a compositional bias: basic and acidic residues. 2 RRM domains span residues Arg-409–Glu-482 and Arg-500–Asp-571.

It localises to the cytoplasm. Has a role in meiosis. The sequence is that of Meiotically up-regulated gene 24 protein (mug24) from Schizosaccharomyces pombe (strain 972 / ATCC 24843) (Fission yeast).